We begin with the raw amino-acid sequence, 830 residues long: Lon protease (830 aa).

The tract at residues Met1–Glu28 is disordered. The Lon N-terminal domain maps to Ile50–Ala245. Gly397–Thr404 contributes to the ATP binding site. Positions Thr633–Glu814 constitute a Lon proteolytic domain. Catalysis depends on residues Ser720 and Lys763.

It belongs to the peptidase S16 family. Homohexamer. Organized in a ring with a central cavity.

Its subcellular location is the cytoplasm. It carries out the reaction Hydrolysis of proteins in presence of ATP.. ATP-dependent serine protease that mediates the selective degradation of mutant and abnormal proteins as well as certain short-lived regulatory proteins. Required for cellular homeostasis and for survival from DNA damage and developmental changes induced by stress. Degrades polypeptides processively to yield small peptide fragments that are 5 to 10 amino acids long. Binds to DNA in a double-stranded, site-specific manner. In Lawsonia intracellularis (strain PHE/MN1-00), this protein is Lon protease.